A 367-amino-acid polypeptide reads, in one-letter code: Peptide chain release factor 2 (367 aa).

Gln-254 carries the post-translational modification N5-methylglutamine.

It belongs to the prokaryotic/mitochondrial release factor family. Post-translationally, methylated by PrmC. Methylation increases the termination efficiency of RF2.

The protein localises to the cytoplasm. Peptide chain release factor 2 directs the termination of translation in response to the peptide chain termination codons UGA and UAA. The polypeptide is Peptide chain release factor 2 (Neisseria meningitidis serogroup C / serotype 2a (strain ATCC 700532 / DSM 15464 / FAM18)).